A 438-amino-acid chain; its full sequence is 3-phosphoshikimate 1-carboxyvinyltransferase (438 aa).

3 residues coordinate 3-phosphoshikimate: K21, S22, and R26. Phosphoenolpyruvate is bound at residue K21. Residues G95 and R123 each contribute to the phosphoenolpyruvate site. 3-phosphoshikimate is bound by residues S167, Q169, D315, and K342. Q169 contacts phosphoenolpyruvate. D315 serves as the catalytic Proton acceptor. Residues R346 and R387 each coordinate phosphoenolpyruvate.

It belongs to the EPSP synthase family. Monomer.

Its subcellular location is the cytoplasm. The catalysed reaction is 3-phosphoshikimate + phosphoenolpyruvate = 5-O-(1-carboxyvinyl)-3-phosphoshikimate + phosphate. It participates in metabolic intermediate biosynthesis; chorismate biosynthesis; chorismate from D-erythrose 4-phosphate and phosphoenolpyruvate: step 6/7. In terms of biological role, catalyzes the transfer of the enolpyruvyl moiety of phosphoenolpyruvate (PEP) to the 5-hydroxyl of shikimate-3-phosphate (S3P) to produce enolpyruvyl shikimate-3-phosphate and inorganic phosphate. The polypeptide is 3-phosphoshikimate 1-carboxyvinyltransferase (Coxiella burnetii (strain CbuK_Q154) (Coxiella burnetii (strain Q154))).